A 382-amino-acid polypeptide reads, in one-letter code: Putative UDP-sugar transporter DDB_G0278631 (382 aa).

The next 7 membrane-spanning stretches (helical) occupy residues 117–137, 183–203, 211–231, 234–254, 264–284, 302–322, and 354–374; these read FSAS…ILHI, MYSA…YFIL, IIAS…TDLS, SLGY…LIYV, YDML…LMIV, FQAY…CIFF, and IIIH…SIWY.

The protein belongs to the TPT transporter family. SLC35D subfamily.

The protein localises to the membrane. Its function is as follows. May be nvolved in the import of UDP-sugars. This chain is Putative UDP-sugar transporter DDB_G0278631, found in Dictyostelium discoideum (Social amoeba).